Consider the following 410-residue polypeptide: Sporulation killing factor maturation protein SkfB (410 aa).

One can recognise a Radical SAM core domain in the interval 103–314 (SYLPISCTLQ…LREARHKWGD (212 aa)). [4Fe-4S] cluster is bound by residues C117, C121, C124, C380, C385, and C387.

Belongs to the radical SAM superfamily. The cofactor is [4Fe-4S] cluster.

It localises to the cytoplasm. In terms of biological role, catalyzes the formation of the thioether bond required for production of the sporulation killing factor (SKF) from SkfA. Forms the cysteine-methionine thioether bond found in SKF; the acceptor amino acid can be hydrophobic, aromatic or a small hydrophilic amino acid but not a larger hydrophilic amino acid, i.e. Met=Ala, Phe, Leu, Tyr&gt;Asn, Ser&gt;&gt;Gln, Glu, Lys. The relative position of Cys and Met in the substrate cannot be inverted, in vitro the thioether bond cannot be made in the absence of the SkfA propeptide, suggesting this is the first reaction in SKF maturation. In vitro, in the absence of a second substrate, cleaves S-adenosyl-L-methionine into Met and 5'-dA. This Bacillus subtilis (strain 168) protein is Sporulation killing factor maturation protein SkfB.